Consider the following 79-residue polypeptide: uncharacterized protein (79 aa).

This is an uncharacterized protein from Listeria innocua serovar 6a (strain ATCC BAA-680 / CLIP 11262).